The chain runs to 107 residues: MKNIGQMLKQAQQLQTRMAEVQEELKAMDVSGQSAAGMCVVTLDGKGGVRSIKIDPSLVDPKETEVMEDLIVAAFNDAKAKVDEMVKEKMSELTGGLKLPPGMSLPF.

Belongs to the YbaB/EbfC family. In terms of assembly, homodimer.

The protein resides in the cytoplasm. The protein localises to the nucleoid. Functionally, binds to DNA and alters its conformation. May be involved in regulation of gene expression, nucleoid organization and DNA protection. The protein is Nucleoid-associated protein Rru_A3472 of Rhodospirillum rubrum (strain ATCC 11170 / ATH 1.1.1 / DSM 467 / LMG 4362 / NCIMB 8255 / S1).